Reading from the N-terminus, the 681-residue chain is Protein hook (681 aa).

Residues 6–123 (NEMYYSLLEW…RLLQLVLGCA (118 aa)) enclose the Calponin-homology (CH) domain. 2 coiled-coil regions span residues 135–439 (EIMS…LKCG) and 482–584 (QTAL…KYRK).

The protein belongs to the hook family. In terms of assembly, homodimer. Interacts with microtubules via its N-terminus.

Its subcellular location is the cytoplasm. It is found in the cytoskeleton. The protein resides in the endosome. It localises to the synapse. Functionally, involved in endocytic trafficking by stabilizing organelles of the endocytic pathway. Probably acts as a cytoskeletal linker protein required to tether endosome vesicles to the cytoskeleton. Involved in modulation of endocytosis at stages required for down-regulation of membrane proteins that control synapse size. Not involved in synaptic vesicle recycling. Required in R7 cells for boss endocytosis into multivesicular bodies (MVBs). Has a role in regulating adult longevity. This chain is Protein hook, found in Drosophila ananassae (Fruit fly).